A 727-amino-acid chain; its full sequence is NADH-ubiquinone oxidoreductase 75 kDa subunit, mitochondrial (727 aa).

A mitochondrion-targeting transit peptide spans 1-23 (MLRIPVRKALVGLSKSPKGCVRT). Residues 30–108 (NLIEVFVDGQ…GWNILTNSEK (79 aa)) enclose the 2Fe-2S ferredoxin-type domain. [2Fe-2S] cluster-binding residues include Cys-64, Cys-75, and Cys-78. Lys-84 carries the post-translational modification N6-acetyllysine. Position 92 (Cys-92) interacts with [2Fe-2S] cluster. In terms of domain architecture, 4Fe-4S His(Cys)3-ligated-type spans 108-147 (KSKKAREGVMEFLLANHPLDCPICDQGGECDLQDQSMMFG). 8 residues coordinate [4Fe-4S] cluster: His-124, Cys-128, Cys-131, Cys-137, Cys-176, Cys-179, Cys-182, and Cys-226. A 4Fe-4S Mo/W bis-MGD-type domain is found at 245 to 301 (TRKTESIDVMDAVGSNIVVSTRTGEVMRILPRMHEDINEXWISDKTRFAYDGLKRQR). 3 positions are modified to N6-acetyllysine: Lys-467, Lys-499, and Lys-709.

This sequence belongs to the complex I 75 kDa subunit family. In terms of assembly, core subunit of respiratory chain NADH dehydrogenase (Complex I) which is composed of 45 different subunits. This is the largest subunit of complex I and it is a component of the iron-sulfur (IP) fragment of the enzyme. Complex I associates with ubiquinol-cytochrome reductase complex (Complex III) to form supercomplexes. Interacts with MDM2 and AKAP1. [2Fe-2S] cluster is required as a cofactor. Requires [4Fe-4S] cluster as cofactor.

The protein resides in the mitochondrion inner membrane. It carries out the reaction a ubiquinone + NADH + 5 H(+)(in) = a ubiquinol + NAD(+) + 4 H(+)(out). Core subunit of the mitochondrial membrane respiratory chain NADH dehydrogenase (Complex I) which catalyzes electron transfer from NADH through the respiratory chain, using ubiquinone as an electron acceptor. Essential for catalysing the entry and efficient transfer of electrons within complex I. Plays a key role in the assembly and stability of complex I and participates in the association of complex I with ubiquinol-cytochrome reductase complex (Complex III) to form supercomplexes. The chain is NADH-ubiquinone oxidoreductase 75 kDa subunit, mitochondrial (NDUFS1) from Gorilla gorilla gorilla (Western lowland gorilla).